The primary structure comprises 217 residues: MQDTTLHIRHLGQQDYESVWHAMQHYTDTRNSDSPDELWIVEHPPVFTQGQAGKSEHILNPGDIPVIQVDRGGQVTYHGPGQLVVYPLLDIKRSKIGVRQLVTHIEQSIIDMLAKYDINAYAKADAPGVYVDQRKVASLGLRIRKGCSFHGLALNVDMDLAPFRRINPCGYAGLEMVQCKELGGPQTVIEAGDQLIITLSQLLGYQQLVHHQGLAAS.

Residues 32-207 form the BPL/LPL catalytic domain; that stretch reads SDSPDELWIV…TLSQLLGYQQ (176 aa). Residues 71–78, 138–140, and 151–153 contribute to the substrate site; these read RGGQVTYH, SLG, and GLA. The Acyl-thioester intermediate role is filled by C169.

It belongs to the LipB family.

The protein resides in the cytoplasm. The catalysed reaction is octanoyl-[ACP] + L-lysyl-[protein] = N(6)-octanoyl-L-lysyl-[protein] + holo-[ACP] + H(+). Its pathway is protein modification; protein lipoylation via endogenous pathway; protein N(6)-(lipoyl)lysine from octanoyl-[acyl-carrier-protein]: step 1/2. In terms of biological role, catalyzes the transfer of endogenously produced octanoic acid from octanoyl-acyl-carrier-protein onto the lipoyl domains of lipoate-dependent enzymes. Lipoyl-ACP can also act as a substrate although octanoyl-ACP is likely to be the physiological substrate. This chain is Octanoyltransferase, found in Shewanella sp. (strain ANA-3).